A 171-amino-acid polypeptide reads, in one-letter code: Xanthine-guanine phosphoribosyltransferase (171 aa).

5-phospho-alpha-D-ribose 1-diphosphate-binding positions include 51 to 52 and 106 to 114; these read RG and DDLVDSGKT. Asp-107 is a binding site for Mg(2+). Guanine contacts are provided by Asp-110 and Ile-153. Asp-110 and Ile-153 together coordinate xanthine. GMP contacts are provided by residues 110 to 114 and 152 to 153; these read DSGKT and WI.

This sequence belongs to the purine/pyrimidine phosphoribosyltransferase family. XGPT subfamily. Homotetramer. The cofactor is Mg(2+).

The protein localises to the cell inner membrane. The catalysed reaction is GMP + diphosphate = guanine + 5-phospho-alpha-D-ribose 1-diphosphate. It catalyses the reaction XMP + diphosphate = xanthine + 5-phospho-alpha-D-ribose 1-diphosphate. It carries out the reaction IMP + diphosphate = hypoxanthine + 5-phospho-alpha-D-ribose 1-diphosphate. It functions in the pathway purine metabolism; GMP biosynthesis via salvage pathway; GMP from guanine: step 1/1. Its pathway is purine metabolism; XMP biosynthesis via salvage pathway; XMP from xanthine: step 1/1. Functionally, purine salvage pathway enzyme that catalyzes the transfer of the ribosyl-5-phosphate group from 5-phospho-alpha-D-ribose 1-diphosphate (PRPP) to the N9 position of the 6-oxopurines guanine and xanthine to form the corresponding ribonucleotides GMP (guanosine 5'-monophosphate) and XMP (xanthosine 5'-monophosphate), with the release of PPi. To a lesser extent, also acts on hypoxanthine. The protein is Xanthine-guanine phosphoribosyltransferase of Ruegeria pomeroyi (strain ATCC 700808 / DSM 15171 / DSS-3) (Silicibacter pomeroyi).